A 974-amino-acid polypeptide reads, in one-letter code: Short transient receptor potential channel 4 (974 aa).

Residues 1-324 are Cytoplasmic-facing; sequence MAQFYYKRNV…YDEFPGWRRR (324 aa). ANK repeat units lie at residues 29–60, 71–93, 96–118, and 141–165; these read LSPSEKAYLNAVEKGDYASVKKSLEEAEIYFK, RTALLIAIENENLELIELLLSFN, VGDALLHAIRKEVVGAVELLLNH, and PDITPIILAAHTNNYEIIKLLVQKG. The segment at 87-172 is multimerization domain; it reads ELLLSFNVYV…QKGVSVPRPH (86 aa). Residues H172, C176, C178, and C181 each coordinate Zn(2+). The stretch at 223–260 forms a coiled coil; that stretch reads LSWELQELSKVENEFKSEYEELSRQCKQFAKDLLDQTR. Residues 254–304 form a multimerization domain region; sequence DLLDQTRSSRELEIILNYRDDNSLIEEQSGNDLARLKLAIKYRQKEFVAQP. The segment at residues 325 to 359 is an intramembrane region (discontinuously helical); the sequence is HWAVKMVTCFIIGLLFPVFSVCYLIAPKSPLGLFI. Topologically, residues 360–362 are cytoplasmic; it reads RKP. Residues 363–383 traverse the membrane as a helical segment; that stretch reads FIKFICHTASYLTFLFLLLLA. Residues 384-403 lie on the Extracellular side of the membrane; sequence SQHIDRSDLNRQGPPPTIVE. A helical membrane pass occupies residues 404–418; sequence WMILPWVLGFIWGEI. The Ca(2+) site is built by E417, Q420, N435, and D438. Topologically, residues 419–432 are cytoplasmic; the sequence is KQMWDGGLQDYIHD. The chain crosses the membrane as a helical span at residues 433–453; sequence WWNLMDFVMNSLYLATISLKI. Over 454–475 the chain is Extracellular; the sequence is VAFVKYSALNPRESWDMWHPTL. A helical membrane pass occupies residues 476 to 498; sequence VAEALFAIANIFSSLRLISLFTA. Topologically, residues 499–511 are cytoplasmic; sequence NSHLGPLQISLGR. A helical membrane pass occupies residues 512–534; the sequence is MLLDILKFLFIYCLVLLAFANGL. Topologically, residues 535 to 599 are extracellular; it reads NQLYFYYEET…HEFTEFVGAT (65 aa). The cysteines at positions 549 and 554 are disulfide-linked. Residues 600 to 620 traverse the membrane as a helical segment; sequence MFGTYNVISLVVLLNMLIAMM. Residues 615 to 974 are interaction with ITPR1, ITPR2 and ITPR3; that stretch reads MLIAMMNNSY…AHEDYVTTRL (360 aa). The Cytoplasmic segment spans residues 621 to 974; that stretch reads NNSYQLIADH…AHEDYVTTRL (354 aa). Residues 765-787 are disordered; that stretch reads ANAASSADSDEKSQSEGNGKDKR. The span at 773 to 784 shows a compositional bias: basic and acidic residues; the sequence is SDEKSQSEGNGK. Y956 and Y969 each carry phosphotyrosine; by FYN. The PDZ-binding domain stretch occupies residues 972 to 974; that stretch reads TRL.

The protein belongs to the transient receptor (TC 1.A.4) family. STrpC subfamily. TRPC4 sub-subfamily. As to quaternary structure, homotetramer. Heterotetramer with TRPC1 and/or TRPC5. Forms a heteromeric ion channel with TRPC1, with a 1:3 TRPC1:TRPC4 stoichiometry. Interacts with TRPC4AP. Isoform alpha but not isoform beta interacts with ITPR1, ITPR2 and ITPR3. Interacts with NHERF1. Interacts with MX1 and RNF24. Interacts (via CIRB domain) with SESTD1 (via the spectrin 1 repeat) and SPTBN5 (via C-terminus). Interacts with CDH5 and CTNNB1. Interacts (via protein 4.1-binding domain) with EPB41L2. Interacts with PLSCR1. As to expression, abundantly expressed in brain (hippocampal CA1 pyramidal neurons, dentate gyrus granule cells, and cerebral cortical neurons, and in the septal nuclei and the mitral layer of olfactory bulb). Lower levels are detected in other tissues.

Its subcellular location is the cell membrane. The catalysed reaction is Ca(2+)(in) = Ca(2+)(out). It carries out the reaction Na(+)(in) = Na(+)(out). It catalyses the reaction Li(+)(in) = Li(+)(out). The enzyme catalyses Cs(+)(in) = Cs(+)(out). With respect to regulation, may be operated by a phosphatidylinositol second messenger system activated by receptor tyrosine kinases or G-protein coupled receptors. May be activated by intracellular calcium store depletion. Functionally, forms a receptor-activated non-selective calcium permeant cation channel. Acts as a cell-cell contact-dependent endothelial calcium entry channel. Forms a homomeric ion channel or a heteromeric ion channel with TRPC1; the heteromeric ion channel has reduced calcium permeability compared to the homomeric channel. Also permeable to monovalent ions including sodium, lithium and cesium ions. This chain is Short transient receptor potential channel 4 (Trpc4), found in Mus musculus (Mouse).